Consider the following 184-residue polypeptide: Peptide deformylase (184 aa).

Positions 92 and 134 each coordinate Fe cation. Glu-135 is an active-site residue. Residue His-138 participates in Fe cation binding.

The protein belongs to the polypeptide deformylase family. It depends on Fe(2+) as a cofactor.

The enzyme catalyses N-terminal N-formyl-L-methionyl-[peptide] + H2O = N-terminal L-methionyl-[peptide] + formate. Its function is as follows. Removes the formyl group from the N-terminal Met of newly synthesized proteins. Requires at least a dipeptide for an efficient rate of reaction. N-terminal L-methionine is a prerequisite for activity but the enzyme has broad specificity at other positions. The protein is Peptide deformylase of Psychrobacter arcticus (strain DSM 17307 / VKM B-2377 / 273-4).